Here is a 173-residue protein sequence, read N- to C-terminus: MKKNRLLFRVIILLILCGAVGFTLYQGFFADKEKMQIGKEAPNFVVTDLEGKKIELKDLKGKGVFLNFWGTWCKPCEKEMPYMNELYPKYKEKGVEIIALDADETEIAVKNFVKQYDLKFPVAIDKGTKIIGTYSVGPLPTSFLIDKDGKVVEKIIGEQTKEQLEGYLQKITP.

A helical; Signal-anchor for type II membrane protein transmembrane segment spans residues 10 to 29 (VIILLILCGAVGFTLYQGFF). In terms of domain architecture, Thioredoxin spans 35–173 (MQIGKEAPNF…LEGYLQKITP (139 aa)). A disulfide bond links Cys73 and Cys76.

Belongs to the thioredoxin family. ResA subfamily.

The protein localises to the cell membrane. It functions in the pathway protein modification; cytochrome c assembly. In terms of biological role, thiol-disulfide oxidoreductase which is required in disulfide reduction during c-type cytochrome synthesis. May accept reducing equivalents from CcdA, leading to breakage of disulfide bonds in apocytochrome c; following this reduction heme can be covalently attached. The protein is Thiol-disulfide oxidoreductase ResA of Bacillus cereus (strain ZK / E33L).